Here is an 824-residue protein sequence, read N- to C-terminus: C-Jun-amino-terminal kinase-interacting protein 2 (824 aa).

4 disordered regions span residues 1–28 (MADR…QDIS), 40–160 (ITDD…GFDL), 172–349 (CSPA…DSPW), and 361–501 (EGSS…APRD). Acidic residues predominate over residues 77–110 (DFQEFEMIDDNEEEDDEDEEEEEEEEEGDGEGQE). The interval 110-275 (EGGDPGSEAP…RMISSISETE (166 aa)) is JNK-binding domain (JBD). The segment covering 141–156 (LRLTTLGAQDSLNNNG) has biased composition (polar residues). The necessary for interaction with FGF13 stretch occupies residues 239 to 498 (GRGGRRSSQE…PGGRGTGPSA (260 aa)). Phosphoserine occurs at positions 254, 302, and 305. Residues 268–305 (ISSISETELELSSDGGSSSSGRSSHLTNSIEEASSPAS) are compositionally biased toward low complexity. Residues 327–346 (TNSEYESGSESEPDLSEDAD) show a composition bias toward acidic residues. A compositionally biased stretch (pro residues) spans 416–432 (APPPPAPAAPRPGPAQP). The segment covering 451–467 (AAPGRAARPGRACSAAC) has biased composition (low complexity). Positions 468–484 (SEEEDEEDDEEEEDAED) are enriched in acidic residues. The SH3 domain maps to 604 to 665 (EREQTHRAVF…PAFYAHAVPG (62 aa)). A PID domain is found at 677 to 813 (PCWVERFDVQ…FLEYYQEHLA (137 aa)).

Belongs to the JIP scaffold family. Forms homo- or heterooligomeric complexes. Binds specific components of the JNK signaling pathway namely JNK1, JNK2, JNK3, MAP2K7, MAP3K10, MAP3K11, MAP3K12 and MAPK13. Also binds the proline-rich domain-containing splice variant of apolipoprotein E receptor 2 (ApoER2). Binds the cytoplasmic tails of LRP1 and LRP2 (Megalin). Binds the TPR motif-containing C-terminal of kinesin light chain, Klc1, pre-assembled MAPK8IP1 scaffolding complexes are then transported as a cargo of kinesin, to the required subcellular location. Interacts with the cytoplasmic domain of APP. Interacts with DCLK2. Interacts with TIAM1 and TIAM2. Interacts with FGF13; enables the interaction with MAPK13 and may regulate the MAPK8IP2 scaffolding activity. Interacts with SH3RF2. As to expression, expressed mainly in the brain and pancreas, including insulin-secreting cells. In the nervous system, more abundantly expressed in the cerebellum, pituitary gland, occipital lobe and the amygdala. Also expressed in fetal brain. Very low levels found in uterus, ovary, prostate, colon, testis, adrenal gland, thyroid gland and salivary gland.

It localises to the cytoplasm. In terms of biological role, the JNK-interacting protein (JIP) group of scaffold proteins selectively mediates JNK signaling by aggregating specific components of the MAPK cascade to form a functional JNK signaling module. JIP2 inhibits IL1 beta-induced apoptosis in insulin-secreting cells. May function as a regulator of vesicle transport, through interactions with the JNK-signaling components and motor proteins. This chain is C-Jun-amino-terminal kinase-interacting protein 2 (MAPK8IP2), found in Homo sapiens (Human).